Consider the following 374-residue polypeptide: Queuine tRNA-ribosyltransferase (374 aa).

The Proton acceptor role is filled by Asp89. Residues 89–93 (DSGGF), Asp143, Gln187, and Gly214 contribute to the substrate site. An RNA binding region spans residues 245-251 (GVGKPED). The Nucleophile role is filled by Asp264. The interval 269-273 (TRNAR) is RNA binding; important for wobble base 34 recognition. Zn(2+) is bound by residues Cys302, Cys304, Cys307, and His333.

It belongs to the queuine tRNA-ribosyltransferase family. Homodimer. Within each dimer, one monomer is responsible for RNA recognition and catalysis, while the other monomer binds to the replacement base PreQ1. The cofactor is Zn(2+).

The enzyme catalyses 7-aminomethyl-7-carbaguanine + guanosine(34) in tRNA = 7-aminomethyl-7-carbaguanosine(34) in tRNA + guanine. It participates in tRNA modification; tRNA-queuosine biosynthesis. Functionally, catalyzes the base-exchange of a guanine (G) residue with the queuine precursor 7-aminomethyl-7-deazaguanine (PreQ1) at position 34 (anticodon wobble position) in tRNAs with GU(N) anticodons (tRNA-Asp, -Asn, -His and -Tyr). Catalysis occurs through a double-displacement mechanism. The nucleophile active site attacks the C1' of nucleotide 34 to detach the guanine base from the RNA, forming a covalent enzyme-RNA intermediate. The proton acceptor active site deprotonates the incoming PreQ1, allowing a nucleophilic attack on the C1' of the ribose to form the product. After dissociation, two additional enzymatic reactions on the tRNA convert PreQ1 to queuine (Q), resulting in the hypermodified nucleoside queuosine (7-(((4,5-cis-dihydroxy-2-cyclopenten-1-yl)amino)methyl)-7-deazaguanosine). The protein is Queuine tRNA-ribosyltransferase of Shewanella baltica (strain OS185).